Here is a 188-residue protein sequence, read N- to C-terminus: UPF0301 protein CPn_0139/CP_0633/CPj0139/CpB0140 (188 aa).

This sequence belongs to the UPF0301 (AlgH) family.

This Chlamydia pneumoniae (Chlamydophila pneumoniae) protein is UPF0301 protein CPn_0139/CP_0633/CPj0139/CpB0140.